A 1521-amino-acid polypeptide reads, in one-letter code: MSDSENDYSDESSGSEYESPVKKGKSAPKKPAAAGSKKKASATRKPAAKKATTTTTSTTKKSTTSKKSESDNDDFSGDDKSSSSDNENVFKNIASSAKKGKSIEEIYQKKELLDQILLRPDTYIGSTERQEEELWVWEDKRMVHRKVSFVPGIYKIFDEILVNAADNKQREGNMKFIKVVIDREKGFISVTNDGAGIPIQVHSEHKIYIPELIFGNLLTSSHYDDSEKRLTGGRNGFGAKLANIFSTKFIVECADSKSKKLYKQTFTNNMRSKEDPKITSYQNKTDYTKITFYPELDRFGMVEFDDDLVALLSKRVYDIAGCNPTLKVSLNDEELGIRSFEKYINLYFPDEENAPKVYYEKVSDRWELAVTLSKESQFNQVSFVNSICTVKGGTHVTHALSNIVTAIQEQVNKKNKGSADIKPAFIKNHLSVFVNCLIENPHFDSQTKETLTSKISSFGSRCEPSEKFIKRVLDSKSGIVASILEFAQFKDQSALKRSTSSGGKKGKVSIPKLDDANLAGGTKSEDCTLILTEGDSAKSLATAGISVVGKDHYGAFPLKGKLLNVRDQSTKVINNDEINNIVTILGLKYGKVYETLSDLRYGHLMIMTDQDHDGSHIKGLIINMVHHFWPTLLRMPGFLVEFITPIVKVFKNNQKPISFYTMPEFLKWRETNDKGWDVKYYKGLGTSTPGEGKEYFSDLERHKIDFEWDEGANDNIELAFSKSRADDRKKWMAEHIEGTFLEQFGVKKLTYSDFINKELVLFSIADCERSIPNIVDGLKTSHRKTLYSCFKRNLKKEIKVAQLIGYVSEHSAYHHGEASLYSTIVGMAQEFVGSNNINLLNPAGSYGTRIAGGKDCSSARYIHTRLNDIARAVYHADDDPILSCVVDDGKKVQPKFYIPVIPMILVNGCVGIGTGWSSTIPNYNPRDLIQNMRLAIDGKPLKPIKPWYRGFLGSIEANQGSKVQGGQYLSKGIWKKLSDNRFEITELPIGFWTQDYRELLDELETPGTRKKKKEEKEKKAASRKGTKAKPTTTKRSKRVDDDDDNEKVTEATVKSYTNYSSESTIHFIIDTIQPVDEINIEKVFKLVSTINETNMVVFDEEGRIQRFATTTALQEHFFPLRIKHYQMRKDFLSERLSEEYSRLSNKARFILAVVNKELVISNVKKVDLINKLKEMKFDRIINKNSNKSARDKIKKKKNAFDEEDAAISSDEEKDGAQEEQDDDTKGYDYLLSLPLWSLTLERVKKLIEERDSKKKEWDILLSTPIQEIYKRDLDALEKALDDQDAYDESLKNQTESLKKRTKTKALPRAKKISAKVVKDTKEAPLTKLVKPTVKIPTTTDSNVSGSKRKKSDDTTSTSTSTTTSSNTKPIESFFAKEDKKPTPAVKKSTLVSLDSDSDFDDDVVVSSKPKAPPKKTSKVIELSDESDQESDQESDQGSDPESPPKRSKAPPKKPTTIATKKATTSKSKVIDDKSSDDEVIKAPTNRPTRSRVPPPKSLSFLDSDSDDDDLYDNEESSSDSD.

Over residues 1-10 (MSDSENDYSD) the composition is skewed to acidic residues. The tract at residues 1–87 (MSDSENDYSD…DDKSSSSDNE (87 aa)) is disordered. The segment covering 36–48 (SKKKASATRKPAA) has biased composition (basic residues). Residues 49 to 62 (KKATTTTTSTTKKS) show a composition bias toward low complexity. ATP is bound by residues N163, N192, 220 to 222 (SSH), and 233 to 240 (GRNGFGAK). The segment at 412–414 (NKK) is interaction with DNA. 446–448 (QTK) lines the ATP pocket. One can recognise a Toprim domain in the interval 527-640 (CTLILTEGDS…TLLRMPGFLV (114 aa)). Residues E533, D609, and D611 each coordinate Mg(2+). Positions 771 to 1273 (IPNIVDGLKT…PIQEIYKRDL (503 aa)) constitute a Topo IIA-type catalytic domain. Y861 acts as the O-(5'-phospho-DNA)-tyrosine intermediate in catalysis. The tract at residues 1007–1047 (GTRKKKKEEKEKKAASRKGTKAKPTTTKRSKRVDDDDDNEK) is disordered. A compositionally biased stretch (basic residues) spans 1021–1037 (ASRKGTKAKPTTTKRSK). The tract at residues 1085-1094 (KLVSTINETN) is interaction with DNA. Disordered stretches follow at residues 1192–1222 (KIKK…EQDD) and 1335–1521 (IPTT…SDSD). A compositionally biased stretch (acidic residues) spans 1201 to 1222 (DEEDAAISSDEEKDGAQEEQDD). Low complexity predominate over residues 1354–1368 (TTSTSTSTTTSSNTK). The segment covering 1422 to 1438 (LSDESDQESDQESDQGS) has biased composition (acidic residues). The segment covering 1454–1467 (PTTIATKKATTSKS) has biased composition (low complexity). Basic and acidic residues predominate over residues 1468–1480 (KVIDDKSSDDEVI). The segment covering 1503-1521 (SDSDDDDLYDNEESSSDSD) has biased composition (acidic residues).

This sequence belongs to the type II topoisomerase family. In terms of assembly, homodimer. Requires Mg(2+) as cofactor. It depends on Mn(2+) as a cofactor. Ca(2+) is required as a cofactor.

The protein resides in the nucleus. The catalysed reaction is ATP-dependent breakage, passage and rejoining of double-stranded DNA.. Its function is as follows. Control of topological states of DNA by transient breakage and subsequent rejoining of DNA strands. Topoisomerase II makes double-strand breaks. This Dictyostelium discoideum (Social amoeba) protein is Probable DNA topoisomerase 2 (top2).